Reading from the N-terminus, the 238-residue chain is CD63 antigen (238 aa).

The Cytoplasmic segment spans residues Met-1 to Lys-11. Residues Phe-12–Gly-32 form a helical membrane-spanning segment. Residues Val-33–Ser-51 lie on the Extracellular side of the membrane. The chain crosses the membrane as a helical span at residues Leu-52 to Cys-72. Residues Cys-73–Cys-81 lie on the Cytoplasmic side of the membrane. A helical membrane pass occupies residues Leu-82–Ile-102. Residues Ala-103 to Val-203 lie on the Extracellular side of the membrane. Residues Asn-125, Asn-130, Asn-150, and Asn-172 are each glycosylated (N-linked (GlcNAc...) asparagine). A helical transmembrane segment spans residues Leu-204–Ala-224. Over Cys-225–Met-238 the chain is Cytoplasmic. Residues Gly-234–Met-238 carry the Lysosomal targeting motif motif.

Belongs to the tetraspanin (TM4SF) family. In terms of assembly, interacts with TIMP1 and ITGB1 and recruits TIMP1 to ITGB1. Interacts with CD9. Identified in a complex with CD9 and ITGB3. Interacts with PMEL. Interacts with KDR/VEGFR2; identified in a complex with ITGB1 and KDR/VEGFR2 and is required to recruit KDR to ITGB1 complexes. Interacts with SYT7. In terms of processing, palmitoylated at a low, basal level in unstimulated platelets. The level of palmitoylation increases when platelets are activated by thrombin (in vitro).

It localises to the cell membrane. It is found in the lysosome membrane. The protein localises to the late endosome membrane. Its subcellular location is the endosome. The protein resides in the multivesicular body. It localises to the melanosome. It is found in the secreted. The protein localises to the extracellular exosome. Its subcellular location is the cell surface. In terms of biological role, functions as a cell surface receptor for TIMP1 and plays a role in the activation of cellular signaling cascades. Plays a role in the activation of ITGB1 and integrin signaling, leading to the activation of AKT, FAK/PTK2 and MAP kinases. Promotes cell survival, reorganization of the actin cytoskeleton, cell adhesion, spreading and migration, via its role in the activation of AKT and FAK/PTK2. Plays a role in VEGFA signaling via its role in regulating the internalization of KDR/VEGFR2. Plays a role in intracellular vesicular transport processes, and is required for normal trafficking of the PMEL luminal domain that is essential for the development and maturation of melanocytes. Plays a role in the adhesion of leukocytes onto endothelial cells via its role in the regulation of SELP trafficking. May play a role in mast cell degranulation in response to Ms4a2/FceRI stimulation, but not in mast cell degranulation in response to other stimuli. This chain is CD63 antigen (CD63), found in Oryctolagus cuniculus (Rabbit).